Consider the following 345-residue polypeptide: CCAAT/enhancer-binding protein beta (345 aa).

A required for Lys-174 sumoylation region spans residues Met-1 to Met-24. Position 3 is an asymmetric dimethylarginine; by CARM1 (Arg-3). Residues Met-24 to Ala-135 form a required for MYC transcriptional repression region. The residue at position 43 (Lys-43) is an N6-acetyllysine; alternate. Lys-43 carries the post-translational modification N6-methylated lysine; alternate. Disordered regions lie at residues Pro-46 to Gly-67 and Leu-79 to Asp-116. Residues Ala-47 to Pro-59 show a composition bias toward pro residues. Residues Ala-84–Ala-100 show a composition bias toward low complexity. The short motif at Asp-116–Asp-124 is the 9aaTAD element. Lys-129 and Lys-132 each carry N6-acetyllysine; by KAT2A and KAT2B. The residue at position 133 (Lys-133) is an N6-acetyllysine; by KAT2A and KAT2B; alternate. Lys-133 participates in a covalent cross-link: Glycyl lysine isopeptide (Lys-Gly) (interchain with G-Cter in SUMO2); alternate. Positions Phe-157 to Gly-178 are disordered. Over residues Leu-160 to Ala-171 the composition is skewed to pro residues. Lys-174 participates in a covalent cross-link: Glycyl lysine isopeptide (Lys-Gly) (interchain with G-Cter in SUMO2); alternate. Lys-174 participates in a covalent cross-link: Glycyl lysine isopeptide (Lys-Gly) (interchain with G-Cter in SUMO); alternate. Glycyl lysine isopeptide (Lys-Gly) (interchain with G-Cter in SUMO2) cross-links involve residues Lys-185 and Lys-187. Positions Ser-218 to Pro-232 are enriched in low complexity. The disordered stretch occupies residues Ser-218 to Ser-271. Residue Thr-226 is modified to Phosphothreonine; by GSK3-beta. O-linked (GlcNAc) serine glycans are attached at residues Ser-227 and Ser-228. Ser-231 carries the phosphoserine; by GSK3-beta modification. At Thr-235 the chain carries Phosphothreonine; by RPS6KA1, CDK2 and MAPK. Glycyl lysine isopeptide (Lys-Gly) (interchain with G-Cter in SUMO2) cross-links involve residues Lys-260 and Lys-262. A Phosphothreonine; by RPS6KA1 and PKC/PRKCA modification is found at Thr-266. Residues Ser-271–Leu-334 enclose the bZIP domain. The basic motif stretch occupies residues Lys-275–Arg-295. The residue at position 288 (Ser-288) is a Phosphoserine; by PKC/PRKCA. Residues Leu-297–Leu-304 form a leucine-zipper region. Ser-325 bears the Phosphoserine; by CaMK2 mark. Residue Lys-332 forms a Glycyl lysine isopeptide (Lys-Gly) (interchain with G-Cter in SUMO2) linkage.

It belongs to the bZIP family. C/EBP subfamily. Binds DNA as a homodimer and as a heterodimer. Interacts with ATF4. Binds DNA as a heterodimer with ATF4. Interacts with MYB; within the complex, MYB and CEBPB bind to different promoter regions. Can form stable heterodimers with CEBPD. Can form stable heterodimers with CEBPA and CEBPE. Interacts with SIX1. Isoform 2 and isoform 3 also form heterodimers. Interacts with TRIM28 and PTGES2. Interacts with PRDM16. Interacts with CCDC85B. Forms a complex with THOC5. Interacts with ZNF638; this interaction increases transcriptional activation. Interacts with CIDEA and CIDEC; these interactions increase transcriptional activation of a subset of CEBPB downstream target genes. Interacts with DDIT3/CHOP. Interacts with EP300; recruits EP300 to chromatin. Interacts with RORA; the interaction disrupts interaction with EP300. Interacts (not methylated) with MED23, MED26, SMARCA2, SMARCB1 and SMARCC1. Interacts with KAT2A and KAT2B. Interacts with ATF5; EP300 is required for ATF5 and CEBPB interaction and DNA binding. Interacts with NFE2L1; the heterodimer represses expression of DSPP during odontoblast differentiation. In terms of processing, methylated. Methylation at Arg-3 by CARM1 and at Lys-43 by EHMT2 inhibit transactivation activity. Methylation is probably inhibited by phosphorylation at Thr-235. Sumoylated by polymeric chains of SUMO2 or SUMO3. Sumoylation at Lys-174 is required for inhibition of T-cells proliferation. In adipocytes, sumoylation at Lys-174 by PIAS1 leads to ubiquitination and subsequent proteasomal degradation. Desumoylated by SENP2, which abolishes ubiquitination and stabilizes protein levels. Post-translationally, ubiquitinated, leading to proteasomal degradation. In terms of processing, phosphorylated at Thr-235 by MAPK and CDK2, serves to prime phosphorylation at Thr-226 and Ser-231 by GSK3B and acquire DNA-binding as well as transactivation activities, required to induce adipogenesis. MAPK and CDK2 act sequentially to maintain Thr-235 in the primed phosphorylated state during mitotical cloning expansion and thereby progression of terminal differentiation. Phosphorylation at Thr-266 enhances transactivation activity. Phosphorylation at Ser-325 in response to calcium increases transactivation activity. Phosphorylated at Thr-235 by RPS6KA1. O-glycosylated, glycosylation at Ser-227 and Ser-228 prevents phosphorylation on Thr-235, Ser-231 and Thr-226 and DNA binding activity which delays the adipocyte differentiation program. Post-translationally, acetylated. Acetylation at Lys-43 is an important and dynamic regulatory event that contributes to its ability to transactivate target genes, including those associated with adipogenesis and adipocyte function. Deacetylation by HDAC1 represses its transactivation activity. Acetylated by KAT2A and KAT2B within a cluster of lysine residues between amino acids 129-133, this acetylation is strongly induced by glucocorticoid treatment and enhances transactivation activity. Expressed at low levels in the lung, kidney and spleen.

It localises to the nucleus. The protein resides in the cytoplasm. Important transcription factor regulating the expression of genes involved in immune and inflammatory responses. Also plays a significant role in adipogenesis, as well as in the gluconeogenic pathway, liver regeneration, and hematopoiesis. The consensus recognition site is 5'-T[TG]NNGNAA[TG]-3'. Its functional capacity is governed by protein interactions and post-translational protein modifications. During early embryogenesis, plays essential and redundant roles with CEBPA. Has a promitotic effect on many cell types such as hepatocytes and adipocytes but has an antiproliferative effect on T-cells by repressing MYC expression, facilitating differentiation along the T-helper 2 lineage. Binds to regulatory regions of several acute-phase and cytokines genes and plays a role in the regulation of acute-phase reaction and inflammation. Also plays a role in intracellular bacteria killing. During adipogenesis, is rapidly expressed and, after activation by phosphorylation, induces CEBPA and PPARG, which turn on the series of adipocyte genes that give rise to the adipocyte phenotype. The delayed transactivation of the CEBPA and PPARG genes by CEBPB appears necessary to allow mitotic clonal expansion and thereby progression of terminal differentiation. Essential for female reproduction because of a critical role in ovarian follicle development. Restricts osteoclastogenesis: together with NFE2L1; represses expression of DSPP during odontoblast differentiation. In terms of biological role, essential for gene expression induction in activated macrophages. Plays a major role in immune responses such as CD4(+) T-cell response, granuloma formation and endotoxin shock. Not essential for intracellular bacteria killing. Its function is as follows. Acts as a dominant negative through heterodimerization with isoform 2. Promotes osteoblast differentiation and osteoclastogenesis. The polypeptide is CCAAT/enhancer-binding protein beta (Homo sapiens (Human)).